The chain runs to 463 residues: MENSLKSSGKPLAAPKVGMVSLGCPKALVDSEQIITQLRAEGYEISGTYDGADLVVVNTCGFIDEAVQESLDAIGEALAENGKVIVTGCLGAKKSASGSGLIAEVHPKVLAVTGPHAVGEVMQAVHSHLPKPHDPFVDLVPAAGIKLTPRHYAYLKISEGCNHRCSFCIIPSMRGELVSRPVAEVMLEAENLFKSGVKELLVISQDTSAYGVDVKYRTGFWNGRPLKTRMTELVGALGELAAQYGAWVRLHYVYPYPHVDEIIPMMAQGPLKGHVLPYLDVPFQHAHPEVLKRMKRLANAERVLERVQKWREICPDLTIRSTFIAGFPGETDAQFETLLDFIREAELDRVGCFAYSPVEGASANALDGALPDDVREARRARFMEVAEEVSAARIARKIGKTLKVLIDEVNAEGGIGRTAADAPEIDGVVYVEPAAKASKRYKVGEFVSVKITGADGHDLWGEV.

Residues proline 15–proline 130 form the MTTase N-terminal domain. Residues cysteine 24, cysteine 60, cysteine 89, cysteine 161, cysteine 165, and cysteine 168 each contribute to the [4Fe-4S] cluster site. One can recognise a Radical SAM core domain in the interval leucine 147–alanine 392. A TRAM domain is found at alanine 395–valine 463.

It belongs to the methylthiotransferase family. RimO subfamily. [4Fe-4S] cluster serves as cofactor.

It localises to the cytoplasm. The enzyme catalyses L-aspartate(89)-[ribosomal protein uS12]-hydrogen + (sulfur carrier)-SH + AH2 + 2 S-adenosyl-L-methionine = 3-methylsulfanyl-L-aspartate(89)-[ribosomal protein uS12]-hydrogen + (sulfur carrier)-H + 5'-deoxyadenosine + L-methionine + A + S-adenosyl-L-homocysteine + 2 H(+). In terms of biological role, catalyzes the methylthiolation of an aspartic acid residue of ribosomal protein uS12. The protein is Ribosomal protein uS12 methylthiotransferase RimO of Burkholderia mallei (strain NCTC 10229).